Consider the following 493-residue polypeptide: MALYIIFLLIASSFILFSFIFSQKPKGKLPPGPPKLPIIGNIHQTVGGLPHYVFRDLAKKYGPIMHLQLGQVSIMVVSSPRLAEEVLKTNDIVVANRPYSLVGDIVLYGSSDVAFGSYGDYWRQMKKIMTVEVLSAKKVAAISGTRQQEVNNLMEYIRSTCGKPFHVREHVMQRNNNIICKSLFGDNCKQQHVLIESLDEMMKLSTGFNVSDLFPNWGFLPVISGYKSTLTRIHKNIDSILSEIFEERKIKRQKGGASDEDMLDVLLNIKERGGLEFPVADNNIKAIFVNMFVGGTDTSVATIEWAMTELMRNPKVMSKAQAEVRQLFKGKNTILDKDLQDLVYLKYIIKETLRLHPVVPILLPRECRGPCKIGGYDIPMNTVLFVNAFACSTDPEYWDDAESFKPERFENSSLDLNGRACEYLPFGAGRRMCPGITFGMSVVEIILAQLLYYFNWELPNGLSPNDIDLTPNFGAVADKKVPLQIVPTLNSLK.

A helical; Signal-anchor for type II membrane protein membrane pass occupies residues 1–21; the sequence is MALYIIFLLIASSFILFSFIF. N-linked (GlcNAc...) asparagine glycans are attached at residues asparagine 209 and asparagine 411. Heme is bound at residue cysteine 433.

It belongs to the cytochrome P450 family. It depends on heme as a cofactor.

The protein resides in the membrane. It participates in secondary metabolite biosynthesis; terpenoid biosynthesis. Probably involved in the biosynthesis of germacrene-derived sesquiterpene lactones. The sequence is that of Cytochrome P450 Tp9025 from Tanacetum parthenium (Feverfew).